The chain runs to 159 residues: Large ribosomal subunit protein uL15 (159 aa).

A compositionally biased stretch (basic and acidic residues) spans 1 to 13; that stretch reads MRIHEVTPKEGST. Residues 1–51 form a disordered region; that stretch reads MRIHEVTPKEGSTKRRRRVGRGISAGQGASCGFGMRGQKSRSGTGTKAGFE. Residues 23-35 show a composition bias toward gly residues; the sequence is ISAGQGASCGFGM.

The protein belongs to the universal ribosomal protein uL15 family. Part of the 50S ribosomal subunit.

In terms of biological role, binds to the 23S rRNA. This chain is Large ribosomal subunit protein uL15, found in Rippkaea orientalis (strain PCC 8801 / RF-1) (Cyanothece sp. (strain PCC 8801)).